The chain runs to 987 residues: Pro-apoptotic serine protease NMA111 (987 aa).

The disordered stretch occupies residues 1 to 29; that stretch reads MPDIPTKRRLSNGSVIDNTNKRQMQSSFV. Positions 11–28 are enriched in polar residues; it reads SNGSVIDNTNKRQMQSSF. Residues 69–262 are serine protease; that stretch reads VKSVVSIQFT…LPVYRPLRAL (194 aa). Catalysis depends on charge relay system residues His110, Asp141, and Ser224. PDZ domains follow at residues 279–364 and 878–950; these read EWSL…VVIQ and PHHG…VSFD.

Belongs to the peptidase S1C family.

The protein resides in the nucleus. Functionally, nuclear serine protease which mediates apoptosis. The sequence is that of Pro-apoptotic serine protease NMA111 (NMA111) from Debaryomyces hansenii (strain ATCC 36239 / CBS 767 / BCRC 21394 / JCM 1990 / NBRC 0083 / IGC 2968) (Yeast).